The primary structure comprises 308 residues: Probable manganese-dependent inorganic pyrophosphatase (308 aa).

Residues histidine 9, aspartate 13, aspartate 15, aspartate 75, histidine 97, and aspartate 149 each coordinate Mn(2+).

The protein belongs to the PPase class C family. Mn(2+) serves as cofactor.

It is found in the cytoplasm. The catalysed reaction is diphosphate + H2O = 2 phosphate + H(+). The polypeptide is Probable manganese-dependent inorganic pyrophosphatase (Listeria welshimeri serovar 6b (strain ATCC 35897 / DSM 20650 / CCUG 15529 / CIP 8149 / NCTC 11857 / SLCC 5334 / V8)).